The sequence spans 626 residues: Chaperone protein HtpG (626 aa).

The tract at residues 1-341 (METKQFKAES…SEDLSLNISR (341 aa)) is a; substrate-binding. The segment at 342 to 552 (EILQHDRQLK…EGELSIEMEK (211 aa)) is b. The interval 490–509 (DLGIEGEEKENTSSSDDKEN) is disordered. Positions 498–509 (KENTSSSDDKEN) are enriched in basic and acidic residues. The interval 553-626 (VLNAMPNNQN…FTNNICKIMK (74 aa)) is c.

The protein belongs to the heat shock protein 90 family. As to quaternary structure, homodimer.

It localises to the cytoplasm. Molecular chaperone. Has ATPase activity. The protein is Chaperone protein HtpG of Clostridium botulinum (strain Okra / Type B1).